Consider the following 521-residue polypeptide: MGSEHPVDGMTRRQFFAKAAAATTAGAFMSLAGPIIEKAYGAGPCPGHLTDIEHIVLLMQENRSFDHYFGTLSDTRGFDDTTPPVVFAQSGWNPMTQAVDPAGVTLPYRFDTTRGPLVAGECVNDPDHSWIGMHNSWNGGANDNWLPAQVPFSPLQGNVPVTMGFYTRRDLPIHYLLADTFTVCDGYFCSLLGGTTPNRLYWMSAWIDPDGTDGGPVLIEPNIQPLQHYSWRIMPENLEDAGVSWKVYQNKLLGALNNTVVGYNGLVNDFKQAADPRSNLARFGISPTYPLDFAADVRNNRLPKVSWVLPGFLLSEHPAFPVNVGAVAIVDALRILLSNPAVWEKTALIVNYDENGGFFDHVVPPTPPPGTPGEFVTVPDIDSVPGSGGIRGPIGLGFRVPCLVISPYSRGPLMVHDTFDHTSTLKLIRARFGVPVPNLTAWRDATVGDMTSTFNFAAPPNPSKPNLDHPRLNALPKLPQCVPNAVLGTVTKTAIPYRVPFPQSMPTQETAPTRGIPSGLC.

Positions 1–39 (MGSEHPVDGMTRRQFFAKAAAATTAGAFMSLAGPIIEKA) form a signal peptide, tat-type signal. The interval 501-521 (FPQSMPTQETAPTRGIPSGLC) is disordered.

Belongs to the bacterial phospholipase C family. Post-translationally, predicted to be exported by the Tat system. The position of the signal peptide cleavage has not been experimentally proven.

It is found in the secreted. The protein resides in the cell wall. It carries out the reaction a 1,2-diacyl-sn-glycero-3-phosphocholine + H2O = phosphocholine + a 1,2-diacyl-sn-glycerol + H(+). In terms of biological role, involved in virulence. Induces cytotoxic effects on mouse macrophage cell lines, via direct or indirect enzymatic hydrolysis of cell membrane phospholipids. Hydrolyzes phosphatidylcholine. The chain is Phospholipase C B from Mycobacterium tuberculosis (strain CDC 1551 / Oshkosh).